The sequence spans 101 residues: Urease subunit beta (101 aa).

This sequence belongs to the urease beta subunit family. As to quaternary structure, heterotrimer of UreA (gamma), UreB (beta) and UreC (alpha) subunits. Three heterotrimers associate to form the active enzyme.

It localises to the cytoplasm. The enzyme catalyses urea + 2 H2O + H(+) = hydrogencarbonate + 2 NH4(+). It functions in the pathway nitrogen metabolism; urea degradation; CO(2) and NH(3) from urea (urease route): step 1/1. This chain is Urease subunit beta, found in Actinobacillus pleuropneumoniae serotype 7 (strain AP76).